The following is a 178-amino-acid chain: Hypoxanthine phosphoribosyltransferase (178 aa).

2 residues coordinate diphosphate: Arg-43 and Gly-44. Glu-99 is a GMP binding site. Glu-99 is an IMP binding site. 2 residues coordinate Mg(2+): Glu-99 and Asp-100. Asp-103 serves as the catalytic Proton acceptor. Residues 103-108 (DSGNTL), Lys-131, and Asp-159 each bind GMP. IMP-binding positions include 103 to 108 (DSGNTL) and Lys-131. Residue Arg-165 coordinates diphosphate.

It belongs to the purine/pyrimidine phosphoribosyltransferase family. In terms of assembly, homotetramer. Mg(2+) serves as cofactor.

It localises to the cytoplasm. The catalysed reaction is IMP + diphosphate = hypoxanthine + 5-phospho-alpha-D-ribose 1-diphosphate. The enzyme catalyses GMP + diphosphate = guanine + 5-phospho-alpha-D-ribose 1-diphosphate. Its pathway is purine metabolism; IMP biosynthesis via salvage pathway; IMP from hypoxanthine: step 1/1. Its function is as follows. Purine salvage pathway enzyme which catalyzes the transfer of the ribosyl-5-phosphate group from 5-phospho-alpha-D-ribose 1-diphosphate (PRPP) to the N9 position of hypoxanthine to yield IMP (inosine 5'-monophosphate). To a lesser extent, can also act on guanine leading to GMP, but shows a highly less efficient activity with xanthine. The sequence is that of Hypoxanthine phosphoribosyltransferase (hpt) from Shigella flexneri.